Here is a 215-residue protein sequence, read N- to C-terminus: L-fuculose phosphate aldolase (215 aa).

Residues 28-29 (GN), 43-44 (TG), and 71-72 (SS) each bind substrate. Residue glutamate 73 is the Proton donor/acceptor of the active site. Zn(2+) is bound by residues glutamate 73, histidine 92, histidine 94, and histidine 155.

Belongs to the aldolase class II family. AraD/FucA subfamily. In terms of assembly, homotetramer. The cofactor is Zn(2+).

The catalysed reaction is L-fuculose 1-phosphate = (S)-lactaldehyde + dihydroxyacetone phosphate. It participates in carbohydrate degradation; L-fucose degradation; L-lactaldehyde and glycerone phosphate from L-fucose: step 3/3. Functionally, involved in the degradation of L-fucose and D-arabinose. Catalyzes the reversible cleavage of L-fuculose 1-phosphate (Fuc1P) to yield dihydroxyacetone phosphate (DHAP) and L-lactaldehyde. The polypeptide is L-fuculose phosphate aldolase (Escherichia coli O157:H7).